Consider the following 378-residue polypeptide: MDLLIVLTYVALAWAVFKIFRIPVNQWTLATAALGGVFLVSGLILLMNYNHPYTFTAQKAVIAIPITPQVTGIVTEVTDKNNQLIQKGEVLFKLDPVRYQARVDRLQADLMTATHNIKTLRAQLTEAQANTTQVSAERDRLFKNYQRYLKGSQAAVNPFSERDIDDARQNFLAQDALVKGSVAEQAQIQSQLDSMVNGEQSQIVSLRAQLTEAKYNLEQTVIRAPSNGYVTQVLIRPGTYAAALPLRPVMVFIPEQKRQIVAQFRQNSLLRLKPGDDAEVVFNALPGQVFHGKLTSILPVVPGGSYQAQGVLQSLTVVPGTDGVLGTIELDPNDDIDALPDGIYAQVAVYSDHFSHVSVMRKVLLRMTSWMHYLYLDH.

Topologically, residues 1–3 are periplasmic; the sequence is MDL. The chain crosses the membrane as a helical span at residues 4-24; sequence LIVLTYVALAWAVFKIFRIPV. The Cytoplasmic segment spans residues 25–26; the sequence is NQ. The chain crosses the membrane as a helical span at residues 27–47; sequence WTLATAALGGVFLVSGLILLM. The Periplasmic portion of the chain corresponds to 48–54; that stretch reads NYNHPYT. Residues 55–75 traverse the membrane as a helical segment; it reads FTAQKAVIAIPITPQVTGIVT. At 76 to 232 the chain is on the cytoplasmic side; the sequence is EVTDKNNQLI…RAPSNGYVTQ (157 aa). Residues 233 to 253 traverse the membrane as a helical segment; sequence VLIRPGTYAAALPLRPVMVFI. Over 254–280 the chain is Periplasmic; the sequence is PEQKRQIVAQFRQNSLLRLKPGDDAEV. A helical membrane pass occupies residues 281–301; the sequence is VFNALPGQVFHGKLTSILPVV. Residues 302–309 lie on the Cytoplasmic side of the membrane; the sequence is PGGSYQAQ. A helical transmembrane segment spans residues 310 to 330; sequence GVLQSLTVVPGTDGVLGTIEL. Residues 331-378 are Periplasmic-facing; sequence DPNDDIDALPDGIYAQVAVYSDHFSHVSVMRKVLLRMTSWMHYLYLDH.

This sequence belongs to the membrane fusion protein (MFP) (TC 8.A.1) family.

The protein resides in the cell inner membrane. This chain is Inner membrane protein YibH (yibH), found in Escherichia coli O157:H7.